The following is a 134-amino-acid chain: Small ribosomal subunit protein bS16 (134 aa).

A disordered region spans residues 115 to 134 (AKLRRRQAKKAAEAAGSAEG).

The protein belongs to the bacterial ribosomal protein bS16 family.

The protein is Small ribosomal subunit protein bS16 of Chlorobaculum tepidum (strain ATCC 49652 / DSM 12025 / NBRC 103806 / TLS) (Chlorobium tepidum).